Reading from the N-terminus, the 437-residue chain is GTPase Der (437 aa).

EngA-type G domains follow at residues 4-167 (PVVA…AEKD) and 175-352 (IRFS…DHQH). GTP contacts are provided by residues 10 to 17 (GRPNVGKS), 57 to 61 (DTGGI), 119 to 122 (NKVD), 181 to 188 (GRPNVGKS), 229 to 233 (DTAGI), and 294 to 297 (NKWD). The region spanning 353–437 (RRIQSAVLND…PIRLIKRRRK (85 aa)) is the KH-like domain.

This sequence belongs to the TRAFAC class TrmE-Era-EngA-EngB-Septin-like GTPase superfamily. EngA (Der) GTPase family. Associates with the 50S ribosomal subunit.

Functionally, GTPase that plays an essential role in the late steps of ribosome biogenesis. The polypeptide is GTPase Der (Limosilactobacillus fermentum (strain NBRC 3956 / LMG 18251) (Lactobacillus fermentum)).